The following is a 352-amino-acid chain: Phenylalanine--tRNA ligase alpha subunit (352 aa).

A Mg(2+)-binding site is contributed by E258.

It belongs to the class-II aminoacyl-tRNA synthetase family. Phe-tRNA synthetase alpha subunit type 1 subfamily. Tetramer of two alpha and two beta subunits. Mg(2+) is required as a cofactor.

The protein localises to the cytoplasm. The enzyme catalyses tRNA(Phe) + L-phenylalanine + ATP = L-phenylalanyl-tRNA(Phe) + AMP + diphosphate + H(+). The protein is Phenylalanine--tRNA ligase alpha subunit of Staphylococcus aureus (strain bovine RF122 / ET3-1).